We begin with the raw amino-acid sequence, 714 residues long: Epithelial splicing regulatory protein 1 (714 aa).

RRM domains are found at residues 225-302, 326-406, and 450-530; these read TVIR…KATG, IIVR…KSTA, and DCVR…ACSA.

The protein belongs to the ESRP family.

The protein localises to the nucleus. Functionally, mRNA splicing factor that regulates the formation of epithelial cell-specific isoforms. Specifically regulates the expression of FGFR2-IIIb, an epithelial cell-specific isoform of fgfr2. Acts by directly binding specific sequences in mRNAs. Binds the GU-rich sequence motifs in the ISE/ISS-3, a cis-element regulatory region present in the mRNA of fgfr2. The polypeptide is Epithelial splicing regulatory protein 1 (esrp1) (Danio rerio (Zebrafish)).